The following is a 490-amino-acid chain: ATP synthase subunit beta, plastid (490 aa).

Residue 170–177 (GGAGVGKT) coordinates ATP.

The protein belongs to the ATPase alpha/beta chains family. F-type ATPases have 2 components, CF(1) - the catalytic core - and CF(0) - the membrane proton channel. CF(1) has five subunits: alpha(3), beta(3), gamma(1), delta(1), epsilon(1). CF(0) has four main subunits: a(1), b(1), b'(1) and c(9-12).

The protein localises to the plastid membrane. It catalyses the reaction ATP + H2O + 4 H(+)(in) = ADP + phosphate + 5 H(+)(out). Functionally, produces ATP from ADP in the presence of a proton gradient across the membrane. The catalytic sites are hosted primarily by the beta subunits. This chain is ATP synthase subunit beta, plastid, found in Cuscuta exaltata (Tall dodder).